The primary structure comprises 1012 residues: Vacuolar protein-sorting protein bro-1 (1012 aa).

The region spanning 5–407 (PMISVPLKAT…ERVETANSEM (403 aa)) is the BRO1 domain. Residues 301–330 (ILADATKRHLATVKEKLEELNKENDMIYHQ) are a coiled coil. Residues 558 to 578 (RKSRKSNPNSPATVEPNLLEA) are disordered. A coiled-coil region spans residues 719–775 (LQSAKNWYKDMRQEAESLEKNVEAFVNNRRAEGAQLLNQIEQDRAANKSSHAALEQE). 2 disordered regions span residues 784 to 812 (MSMDPSPTSPKPSSGSGGRPTPAPLSFAP) and 827 to 1012 (NFST…SAWK). Residues 827–842 (NFSTQYPASPPATQVP) are compositionally biased toward polar residues. Over residues 844 to 857 (NPGGQQQTPYQQYN) the composition is skewed to low complexity. Positions 892–913 (QTSFAQSRPYSLTTYGNPSALN) are enriched in polar residues. Residues 914–930 (PQGGQPQQSQPGGYVPP) are compositionally biased toward low complexity. Over residues 931-945 (GFVPPPPPPGPPPLG) the composition is skewed to pro residues. Residues 970-985 (PGSGQQGPQGQQGGWG) are compositionally biased toward gly residues.

This sequence belongs to the BRO1 family.

The protein localises to the cytoplasm. It localises to the endosome. In terms of biological role, involved in concentration and sorting of cargo proteins of the multivesicular body (MVB) for incorporation into intralumenal vesicles. The protein is Vacuolar protein-sorting protein bro-1 (bro-1) of Neurospora crassa (strain ATCC 24698 / 74-OR23-1A / CBS 708.71 / DSM 1257 / FGSC 987).